Reading from the N-terminus, the 141-residue chain is Large ribosomal subunit protein uL16 (141 aa).

The protein belongs to the universal ribosomal protein uL16 family. Part of the 50S ribosomal subunit.

Functionally, binds 23S rRNA and is also seen to make contacts with the A and possibly P site tRNAs. The polypeptide is Large ribosomal subunit protein uL16 (Campylobacter fetus subsp. fetus (strain 82-40)).